Here is a 463-residue protein sequence, read N- to C-terminus: Methionine aminopeptidase 2-2 (463 aa).

Residues 1 to 97 (MGSKSPEGHW…TLSVTELKQT (97 aa)) form a disordered region. Residues 27 to 36 (DPQTSQNGSG) show a composition bias toward polar residues. Acidic residues predominate over residues 46–57 (GDDDDDDEDAEE). Positions 69–85 (KKKKRKKSNKKKKKKTK) are enriched in basic residues. The span at 86 to 97 (SGTLSVTELKQT) shows a compositional bias: polar residues. Substrate is bound at residue His215. A divalent metal cation-binding residues include Asp236, Asp247, and His316. His324 provides a ligand contact to substrate. A divalent metal cation-binding residues include Glu349 and Glu444.

This sequence belongs to the peptidase M24A family. Methionine aminopeptidase eukaryotic type 2 subfamily. Co(2+) is required as a cofactor. Zn(2+) serves as cofactor. It depends on Mn(2+) as a cofactor. Requires Fe(2+) as cofactor.

The protein resides in the cytoplasm. The enzyme catalyses Release of N-terminal amino acids, preferentially methionine, from peptides and arylamides.. In terms of biological role, cotranslationally removes the N-terminal methionine from nascent proteins. The N-terminal methionine is often cleaved when the second residue in the primary sequence is small and uncharged (Met-Ala-, Cys, Gly, Pro, Ser, Thr, or Val). This is Methionine aminopeptidase 2-2 from Neosartorya fischeri (strain ATCC 1020 / DSM 3700 / CBS 544.65 / FGSC A1164 / JCM 1740 / NRRL 181 / WB 181) (Aspergillus fischerianus).